Consider the following 587-residue polypeptide: Thioredoxin domain-containing protein 3 (587 aa).

The 118-residue stretch at 2-119 folds into the Thioredoxin domain; sequence ASKKREVQLQ…VIALIDEEKK (118 aa). A disulfide bond links cysteine 39 and cysteine 42. NDK stretches follow at residues 157-255, 313-453, and 454-587; these read MAVI…PLEE, VQRT…STLA, and LIKP…NFEN.

In the C-terminal section; belongs to the NDK family. In terms of assembly, monomer. In terms of tissue distribution, testis-specific.

It localises to the cytoplasm. Functionally, probably required during the final stages of sperm tail maturation in the testis and/or epididymis, where extensive disulfide bonding of fibrous sheath (FS) proteins occurs. In vitro, it has neither nucleoside diphosphate kinase (NDPK) activity nor reducing activity on disulfide bonds. Exhibits a 3'-5' exonuclease activity with a preference for single-stranded DNA, suggesting roles in DNA proofreading and repair. In Rattus norvegicus (Rat), this protein is Thioredoxin domain-containing protein 3 (Nme8).